A 397-amino-acid polypeptide reads, in one-letter code: Tryptophan synthase beta chain (397 aa).

At lysine 87 the chain carries N6-(pyridoxal phosphate)lysine.

Belongs to the TrpB family. As to quaternary structure, tetramer of two alpha and two beta chains. It depends on pyridoxal 5'-phosphate as a cofactor.

The enzyme catalyses (1S,2R)-1-C-(indol-3-yl)glycerol 3-phosphate + L-serine = D-glyceraldehyde 3-phosphate + L-tryptophan + H2O. The protein operates within amino-acid biosynthesis; L-tryptophan biosynthesis; L-tryptophan from chorismate: step 5/5. In terms of biological role, the beta subunit is responsible for the synthesis of L-tryptophan from indole and L-serine. This chain is Tryptophan synthase beta chain, found in Cronobacter sakazakii (strain ATCC BAA-894) (Enterobacter sakazakii).